Consider the following 222-residue polypeptide: UPF0316 protein Mboo_0791 (222 aa).

3 helical membrane passes run 25–45, 67–87, and 93–113; these read FFLFTPDILNYIVLPVLIFLA, LAPVIAFFEIIIWLLAIVGVL, and IAYFLAYAFGFALGTYVGLVI.

It belongs to the UPF0316 family.

The protein localises to the cell membrane. This Methanoregula boonei (strain DSM 21154 / JCM 14090 / 6A8) protein is UPF0316 protein Mboo_0791.